Consider the following 313-residue polypeptide: Olfactory receptor 1G1 (313 aa).

Residues 1-25 (MEGKNLTSISEFFLLGFSEQLEEQK) lie on the Extracellular side of the membrane. An N-linked (GlcNAc...) asparagine glycan is attached at asparagine 5. Residues 26–49 (ALFGSFLFMYLVTVAGNLLIILVI) form a helical membrane-spanning segment. Topologically, residues 50–57 (ITDTQLHT) are cytoplasmic. A helical membrane pass occupies residues 58-79 (PMYFFLANLSLADACFVSTTVP). Topologically, residues 80–100 (KMLANIQIQSQAISYSGCLLQ) are extracellular. The cysteines at positions 97 and 189 are disulfide-linked. Residues 101–120 (LYFFMLFVMLEAFLLAVMAY) traverse the membrane as a helical segment. Topologically, residues 121–140 (DRYVAICHPLHYILIMSPGL) are cytoplasmic. Residues 141 to 158 (CVFLVSASWIMNALHSLL) form a helical membrane-spanning segment. The Extracellular portion of the chain corresponds to 159–196 (HTLLMNSLSFCANHEIPHFFCDIDPLLSLSCTDPFTNE). The chain crosses the membrane as a helical span at residues 197–219 (LVIFITGGLTGLVCVLCLIISYT). Topologically, residues 220 to 236 (NIFSTILKIPSAQGKRK) are cytoplasmic. A helical membrane pass occupies residues 237–259 (AFSTCGSHLSVVSLFFGTSFCVY). Residues 260-272 (FIPPSTRSAQKDT) lie on the Extracellular side of the membrane. The chain crosses the membrane as a helical span at residues 273-292 (VASVMYTVVTPMLNPFIYSL). The Cytoplasmic portion of the chain corresponds to 293 to 313 (RNQEIKSSLRKLIWVREIHSP).

It belongs to the G-protein coupled receptor 1 family.

The protein localises to the cell membrane. Its function is as follows. Odorant receptor. The chain is Olfactory receptor 1G1 (OR1G1) from Gorilla gorilla gorilla (Western lowland gorilla).